A 275-amino-acid polypeptide reads, in one-letter code: 4-diphosphocytidyl-2-C-methyl-D-erythritol kinase (275 aa).

Residue Lys-14 is part of the active site. Residue 98–108 (PMGAGLGGGSS) coordinates ATP. Residue Asp-140 is part of the active site.

Belongs to the GHMP kinase family. IspE subfamily.

The catalysed reaction is 4-CDP-2-C-methyl-D-erythritol + ATP = 4-CDP-2-C-methyl-D-erythritol 2-phosphate + ADP + H(+). The protein operates within isoprenoid biosynthesis; isopentenyl diphosphate biosynthesis via DXP pathway; isopentenyl diphosphate from 1-deoxy-D-xylulose 5-phosphate: step 3/6. Its function is as follows. Catalyzes the phosphorylation of the position 2 hydroxy group of 4-diphosphocytidyl-2C-methyl-D-erythritol. The polypeptide is 4-diphosphocytidyl-2-C-methyl-D-erythritol kinase (Francisella tularensis subsp. holarctica (strain FTNF002-00 / FTA)).